The primary structure comprises 196 residues: Probable GTP-binding protein EngB (196 aa).

Positions 22-194 (DKKEIAFAGR…LKTIGEILGD (173 aa)) constitute an EngB-type G domain. GTP is bound by residues 30–37 (GRSNVGKS), 56–60 (GKTRS), 74–77 (DLPG), 141–144 (TKSD), and 173–175 (FSS). Residues Ser-37 and Thr-58 each coordinate Mg(2+).

The protein belongs to the TRAFAC class TrmE-Era-EngA-EngB-Septin-like GTPase superfamily. EngB GTPase family. It depends on Mg(2+) as a cofactor.

In terms of biological role, necessary for normal cell division and for the maintenance of normal septation. The chain is Probable GTP-binding protein EngB from Petrotoga mobilis (strain DSM 10674 / SJ95).